A 183-amino-acid chain; its full sequence is Ribosome-recycling factor (183 aa).

The protein belongs to the RRF family.

Its subcellular location is the cytoplasm. In terms of biological role, responsible for the release of ribosomes from messenger RNA at the termination of protein biosynthesis. May increase the efficiency of translation by recycling ribosomes from one round of translation to another. This Bifidobacterium longum (strain DJO10A) protein is Ribosome-recycling factor.